The primary structure comprises 400 residues: Argininosuccinate synthase (400 aa).

8–16 is a binding site for ATP; the sequence is AYSGGLDTS. An L-citrulline-binding site is contributed by Y85. G115 contributes to the ATP binding site. Residues T117, N121, and D122 each coordinate L-aspartate. N121 lines the L-citrulline pocket. R125, S173, E258, and Y270 together coordinate L-citrulline.

Belongs to the argininosuccinate synthase family. Type 1 subfamily. In terms of assembly, homotetramer.

The protein localises to the cytoplasm. The enzyme catalyses L-citrulline + L-aspartate + ATP = 2-(N(omega)-L-arginino)succinate + AMP + diphosphate + H(+). It functions in the pathway amino-acid biosynthesis; L-arginine biosynthesis; L-arginine from L-ornithine and carbamoyl phosphate: step 2/3. The polypeptide is Argininosuccinate synthase (Staphylococcus haemolyticus (strain JCSC1435)).